The primary structure comprises 276 residues: Formamidopyrimidine-DNA glycosylase (276 aa).

Residue Pro-2 is the Schiff-base intermediate with DNA of the active site. Glu-3 (proton donor) is an active-site residue. The active-site Proton donor; for beta-elimination activity is Lys-60. 3 residues coordinate DNA: His-93, Arg-112, and Arg-155. The FPG-type zinc finger occupies 240–274; the sequence is LVYGRKDEACTKCGAEIIRFVVGGRGTHICPDCQK. Catalysis depends on Arg-264, which acts as the Proton donor; for delta-elimination activity.

The protein belongs to the FPG family. Monomer. Zn(2+) is required as a cofactor.

The enzyme catalyses Hydrolysis of DNA containing ring-opened 7-methylguanine residues, releasing 2,6-diamino-4-hydroxy-5-(N-methyl)formamidopyrimidine.. The catalysed reaction is 2'-deoxyribonucleotide-(2'-deoxyribose 5'-phosphate)-2'-deoxyribonucleotide-DNA = a 3'-end 2'-deoxyribonucleotide-(2,3-dehydro-2,3-deoxyribose 5'-phosphate)-DNA + a 5'-end 5'-phospho-2'-deoxyribonucleoside-DNA + H(+). Functionally, involved in base excision repair of DNA damaged by oxidation or by mutagenic agents. Acts as a DNA glycosylase that recognizes and removes damaged bases. Has a preference for oxidized purines, such as 7,8-dihydro-8-oxoguanine (8-oxoG). Has AP (apurinic/apyrimidinic) lyase activity and introduces nicks in the DNA strand. Cleaves the DNA backbone by beta-delta elimination to generate a single-strand break at the site of the removed base with both 3'- and 5'-phosphates. This chain is Formamidopyrimidine-DNA glycosylase, found in Brevibacillus brevis (strain 47 / JCM 6285 / NBRC 100599).